We begin with the raw amino-acid sequence, 338 residues long: Protein UL141 (338 aa).

The signal sequence occupies residues methionine 1–glutamate 25. The Extracellular segment spans residues aspartate 37–arginine 278. Asparagine 117, asparagine 132, and asparagine 147 each carry an N-linked (GlcNAc...) asparagine; by host glycan. Residues glycine 279–cysteine 299 traverse the membrane as a helical segment. The Cytoplasmic segment spans residues tyrosine 300 to arginine 338.

Interacts with human PVR. Interacts with human TNFRSF10A and TNFRSF10B. Forms a homodimer that engages two TNFRSF10B monomers.

The protein localises to the host endoplasmic reticulum membrane. Functionally, evasion of NK cell killing. Blocks surface expression of PVR which is a ligand for NK cell-activating receptors. Binds human PVR in the endoplasmic reticulum and prevents its maturation and transport to the cell surface. Targets also the natural killer cell activating ligand NECTIN2 for proteasome-mediated degradation. Additionally promotes intracellular retention of TNFRSF10A/TRAIL-R1 and TNFRSF10B/TRAIL-R2 and thus down-regulates their cell surface expression. In Human cytomegalovirus (strain Merlin) (HHV-5), this protein is Protein UL141 (UL141).